A 250-amino-acid polypeptide reads, in one-letter code: Beta-lactamase HcpA (250 aa).

Positions 1-25 (MLGSVKKTLFGVLCLGALCLRGLMA) are cleaved as a signal peptide. 5 TPR repeats span residues 29–62 (AKEL…KEGF), 67–98 (LGAF…NDGY), 100–133 (CRLL…LNHA), 134–169 (EGCT…LKDS), and 170–202 (PGCI…KDGR). Intrachain disulfides connect cysteine 56/cysteine 64, cysteine 92/cysteine 100, cysteine 128/cysteine 136, cysteine 164/cysteine 172, cysteine 196/cysteine 204, and cysteine 232/cysteine 240.

This sequence belongs to the hcp beta-lactamase family.

It is found in the secreted. The enzyme catalyses a beta-lactam + H2O = a substituted beta-amino acid. Its activity is regulated as follows. Inhibited by cloxacillin and oxacillin but not by ACA derivatives or metal chelators. Slowly hydrolyzes 6-aminopenicillinic acid and 7-aminocephalosporanic acid (ACA) derivatives. May be involved in the synthesis of the cell wall peptidoglycan. This chain is Beta-lactamase HcpA (hcpA), found in Helicobacter pylori (strain J99 / ATCC 700824) (Campylobacter pylori J99).